Here is a 120-residue protein sequence, read N- to C-terminus: uncharacterized protein (120 aa).

The chain crosses the membrane as a helical span at residues 8 to 28 (LIVKWFVGLMLIMMMVAVSLF).

The protein localises to the membrane. This is an uncharacterized protein from Bacillus anthracis.